A 217-amino-acid polypeptide reads, in one-letter code: Frizzled-8 (217 aa).

Over 1 to 26 the chain is Extracellular; the sequence is AGAAELQPELAVAEHVRYESTGPALC. A helical transmembrane segment spans residues 27–47; sequence TVVFLLVYFFGMASSIWWVIL. Over 48 to 69 the chain is Cytoplasmic; sequence SLTWFLAAGMKWGNEAIAGYAQ. Residues 70-90 form a helical membrane-spanning segment; sequence YFHLAAWLLPSVKSIAVLALS. Topologically, residues 91–113 are extracellular; it reads SVDGDPVAGICYVGNQSLENLRG. Residue Asn105 is glycosylated (N-linked (GlcNAc...) asparagine). A helical transmembrane segment spans residues 114 to 134; that stretch reads FVLAPLVVYLFTGSLFLLAGF. Residues 135–160 lie on the Cytoplasmic side of the membrane; sequence VSLFRIRSVIKQGGTKTDKLEKLMIR. A helical membrane pass occupies residues 161 to 181; sequence IGIFTVLYTVPATIVIACYIY. The Extracellular portion of the chain corresponds to 182–209; sequence EQHNREAWEQAQNCSCPGDPHRPKPDYA. Residue Asn194 is glycosylated (N-linked (GlcNAc...) asparagine). Residues 210–217 form a helical membrane-spanning segment; sequence VFMLKYFM.

The protein belongs to the G-protein coupled receptor Fz/Smo family.

It localises to the membrane. Its subcellular location is the cell membrane. In terms of biological role, receptor for Wnt proteins. Most of frizzled receptors are coupled to the beta-catenin canonical signaling pathway, which leads to the activation of disheveled proteins, inhibition of GSK-3 kinase, nuclear accumulation of beta-catenin and activation of Wnt target genes. A second signaling pathway involving PKC and calcium fluxes has been seen for some family members, but it is not yet clear if it represents a distinct pathway or if it can be integrated in the canonical pathway, as PKC seems to be required for Wnt-mediated inactivation of GSK-3 kinase. Both pathways seem to involve interactions with G-proteins. May be involved in transduction and intercellular transmission of polarity information during tissue morphogenesis and/or in differentiated tissues. The polypeptide is Frizzled-8 (FZD8) (Gallus gallus (Chicken)).